We begin with the raw amino-acid sequence, 218 residues long: Small ribosomal subunit protein uS3c (218 aa).

Residues 47-120 (VRTHIKSSSN…KLHIAIEKVA (74 aa)) form the KH type-2 domain.

The protein belongs to the universal ribosomal protein uS3 family. In terms of assembly, part of the 30S ribosomal subunit.

Its subcellular location is the plastid. The protein resides in the chloroplast. This Picea abies (Norway spruce) protein is Small ribosomal subunit protein uS3c (rps3).